Reading from the N-terminus, the 463-residue chain is MVIPAELIQKALKQQSGWGFTEGLVLGQLSVIITVIIILKFVIFAENKSPKKGNDMTAVSAKDKEAEHVAMGGQTANGVKTSGVRRNKSSTNLRNRLATGAAGASISRPGSSRVSMVRSTSGAVPVLGQNGGATPRGMAGSSVAGSTSNLAVPVPTTPTIAEGIEPENDSTLQDDSAIIDLDLDLDLSPVDEILHKTCYQLSSHAPESLDWFNVLVAQIITQLRFDAKANNNLNLLNSLDAAFNSKRPDFIDRINVTEINLGDDYPILSNCKITHKGTGPAGSGAASGNNMPNNAEYDDSRLEAQMDIDLSDTITLGIETRLNLNQPKILSPFLSLSTSLPVSLSVTIVRFTARLNISLYQQIEQTEEDEKDKRDTILSINFEPDYKLQLSVKSLVGSRSRLQNVPTLESLVDSKIQKWFRDHYVEPHQMIFILPSLWPRKKRSATAGAAGTATGADTASGSS.

Topologically, residues 1–23 (MVIPAELIQKALKQQSGWGFTEG) are lumenal. Residues 24–44 (LVLGQLSVIITVIIILKFVIF) traverse the membrane as a helical segment. Residues 45-463 (AENKSPKKGN…TGADTASGSS (419 aa)) lie on the Cytoplasmic side of the membrane. The disordered stretch occupies residues 72–152 (GGQTANGVKT…VAGSTSNLAV (81 aa)). Residues 108–122 (RPGSSRVSMVRSTSG) show a composition bias toward polar residues. The SMP-LTD domain occupies 205-435 (APESLDWFNV…EPHQMIFILP (231 aa)).

This sequence belongs to the MMM1 family. As to quaternary structure, homodimer. Component of the ER-mitochondria encounter structure (ERMES) or MDM complex, composed of MMM1, MDM10, MDM12 and MDM34. An MMM1 homodimer associates with one molecule of MDM12 on each side in a pairwise head-to-tail manner, and the SMP-LTD domains of MMM1 and MDM12 generate a continuous hydrophobic tunnel for phospholipid trafficking.

It localises to the endoplasmic reticulum membrane. Functionally, component of the ERMES/MDM complex, which serves as a molecular tether to connect the endoplasmic reticulum (ER) and mitochondria. Components of this complex are involved in the control of mitochondrial shape and protein biogenesis, and function in nonvesicular lipid trafficking between the ER and mitochondria. The MDM12-MMM1 subcomplex functions in the major beta-barrel assembly pathway that is responsible for biogenesis of all outer membrane beta-barrel proteins, and acts in a late step after the SAM complex. The MDM10-MDM12-MMM1 subcomplex further acts in the TOM40-specific pathway after the action of the MDM12-MMM1 complex. Essential for establishing and maintaining the structure of mitochondria and maintenance of mtDNA nucleoids. This chain is Maintenance of mitochondrial morphology protein 1-2, found in Yarrowia lipolytica (strain CLIB 122 / E 150) (Yeast).